Here is a 506-residue protein sequence, read N- to C-terminus: ATP synthase subunit alpha (506 aa).

Residue 170–177 (GDRQTGKT) participates in ATP binding.

It belongs to the ATPase alpha/beta chains family. As to quaternary structure, F-type ATPases have 2 components, CF(1) - the catalytic core - and CF(0) - the membrane proton channel. CF(1) has five subunits: alpha(3), beta(3), gamma(1), delta(1), epsilon(1). CF(0) has four main subunits: a(1), b(1), b'(1) and c(9-12).

Its subcellular location is the cellular thylakoid membrane. The catalysed reaction is ATP + H2O + 4 H(+)(in) = ADP + phosphate + 5 H(+)(out). Its function is as follows. Produces ATP from ADP in the presence of a proton gradient across the membrane. The alpha chain is a regulatory subunit. This is ATP synthase subunit alpha from Parasynechococcus marenigrum (strain WH8102).